The chain runs to 173 residues: MASIPATVATVAQANMVAPFTGLKANAAFPVTKKVNDFSTLPSNGGRVQCMKVWPPLGKKKYETLSYLPDLTEVQLAKEVDYLLRNKWVPCLEFELEHGFVYRENARSPGYYDGRYWTMWKLPMFGCTDSAQVMKELQECKKEYPQAWIRIIGFDNVRQVQCISFIASKPGGF.

The transit peptide at 1–49 (MASIPATVATVAQANMVAPFTGLKANAAFPVTKKVNDFSTLPSNGGRVQ) directs the protein to the chloroplast.

This sequence belongs to the RuBisCO small chain family. Heterohexadecamer of 8 large and 8 small subunits.

The protein resides in the plastid. The protein localises to the chloroplast. Functionally, ruBisCO catalyzes two reactions: the carboxylation of D-ribulose 1,5-bisphosphate, the primary event in carbon dioxide fixation, as well as the oxidative fragmentation of the pentose substrate. Both reactions occur simultaneously and in competition at the same active site. Although the small subunit is not catalytic it is essential for maximal activity. In Flaveria pringlei, this protein is Ribulose bisphosphate carboxylase small subunit, chloroplastic 1.